The primary structure comprises 940 residues: Reticulon-3 (940 aa).

Residues 1 to 24 (MAESSAATQSPSVSSSSSGAEPST) show a composition bias toward low complexity. Disordered stretches follow at residues 1–32 (MAES…GGSP), 71–91 (SSEI…LGSH), and 129–182 (DIPC…ALDL). Residue Ala-2 is modified to N-acetylalanine. At 2 to 771 (AESSAATQSP…KKTGFVFGTT (770 aa)) the chain is on the cytoplasmic side. The residue at position 31 (Ser-31) is a Phosphoserine. Phosphoserine is present on residues Ser-196, Ser-204, Ser-209, Ser-212, Ser-249, and Ser-282. Disordered stretches follow at residues 314–335 (AKQQ…RSEH), 381–405 (KGYL…ISGS), and 428–512 (EVTE…LEGQ). A compositionally biased stretch (acidic residues) spans 430 to 447 (TEVDSSGESDDTVIEDTT). Residues 472–490 (TSERENKETTSHETVRSEM) show a composition bias toward basic and acidic residues. Positions 491–512 (YENSEQQQAHAETPTQRSLEGQ) are enriched in polar residues. A Phosphoserine modification is found at Ser-508. Thr-572 is modified (phosphothreonine). Phosphoserine is present on residues Ser-575, Ser-576, and Ser-652. Disordered stretches follow at residues 623-655 (NKLS…SSDL) and 672-701 (QVQA…SDIL). Polar residues predominate over residues 689–699 (DPQSGPQNSSD). The region spanning 752 to 940 (VHDLIFWRDV…LPGIAKKKAE (189 aa)) is the Reticulon domain. An intramembrane region (helical) is located at residues 772–795 (LIMLLSLAAFSVISVVSYLILALL). At 796–852 (SVTISFRVYKSVIQAVQKSEEGHPFKAYLDVDITLSSEAFHSYMNAAMVHVNKALKL) the chain is on the cytoplasmic side. Residues 853 to 875 (IIRLFLVEDLVDSLKLAVFMWLM) constitute an intramembrane region (helical). Residues 876–879 (TYVG) lie on the Cytoplasmic side of the membrane. The segment at residues 880-902 (AVFNGITLLILAELLVFSVPIVY) is an intramembrane region (helical). The interval 895–940 (VFSVPIVYEKYKTQIDHYVGIARDQTKSIVEKIQAKLPGIAKKKAE) is interaction with FADD. Topologically, residues 903–940 (EKYKTQIDHYVGIARDQTKSIVEKIQAKLPGIAKKKAE) are cytoplasmic. The interaction with BACE1 stretch occupies residues 908-910 (QID).

In terms of assembly, homodimer. Interacts with RTN4. Isoform 2 interacts with BACE1, BACE2, BCL2 and FADD. Interacts with ATL2. Interacts with TMEM33. Interacts with ATL1. Interacts with ZFYVE27 and with KIF5A in a ZFYVE27-dependent manner. Interacts with RIGI. Interacts with TRIM25. In terms of tissue distribution, present in olfactory bulb, olfactory epithelium and retina (at protein level).

Its subcellular location is the endoplasmic reticulum membrane. It localises to the golgi apparatus membrane. May be involved in membrane trafficking in the early secretory pathway. Inhibits BACE1 activity and amyloid precursor protein processing. May induce caspase-8 cascade and apoptosis. May favor BCL2 translocation to the mitochondria upon endoplasmic reticulum stress. Induces the formation of endoplasmic reticulum tubules. Acts also as an inflammation-resolving regulator by interacting with both TRIM25 and RIGI, subsequently impairing RIGI 'Lys-63'-linked polyubiquitination leading to IRF3 and NF-kappa-B inhibition. This is Reticulon-3 (Rtn3) from Rattus norvegicus (Rat).